We begin with the raw amino-acid sequence, 285 residues long: Urease accessory protein UreD (285 aa).

The protein belongs to the UreD family. As to quaternary structure, ureD, UreF and UreG form a complex that acts as a GTP-hydrolysis-dependent molecular chaperone, activating the urease apoprotein by helping to assemble the nickel containing metallocenter of UreC. The UreE protein probably delivers the nickel.

It is found in the cytoplasm. Functionally, required for maturation of urease via the functional incorporation of the urease nickel metallocenter. This Cenarchaeum symbiosum (strain A) protein is Urease accessory protein UreD.